The chain runs to 564 residues: Efflux pump DEP3 (564 aa).

Residues 1–12 are compositionally biased toward polar residues; that stretch reads MVYSSTSSSQNR. Residues 1 to 48 are disordered; that stretch reads MVYSSTSSSQNRPDGEKHVEAVGSSTRIPSDELVDRGGGDTTTGKQSP. Positions 29–38 are enriched in basic and acidic residues; sequence PSDELVDRGG. Transmembrane regions (helical) follow at residues 65–85, 91–111, 122–142, 152–172, 185–205, 212–232, 255–275, 281–301, 332–352, 362–382, 386–406, 423–443, 452–472, and 528–548; these read STTL…PAII, LELL…ILLW, WVYI…GAAP, VIAG…VSVL, STVV…AFAA, WGFY…FLLF, AVIF…GGVV, GTVI…IVLL, FLSS…FQFI, VRLL…GFLM, GLIP…TALM, ILIG…VQSL, AVGA…AISG, and TIWA…FPLL.

It belongs to the major facilitator superfamily. TCR/Tet family.

The protein localises to the cell membrane. Its function is as follows. Efflux pump; part of the gene cluster that mediates the biosynthesis of depudecin, a highly oxidized eleven-carbon linear polyketide that acts as a histone deacetylase (HDAC) inhibitor and makes a small contribution to pathogenesis. Is presumed either to be responsible for exporting depudecin, to provide self-protection, or both. This chain is Efflux pump DEP3, found in Alternaria brassicicola (Dark leaf spot agent).